The primary structure comprises 512 residues: Glutathione-binding protein GsiB (512 aa).

Positions 1–26 (MARAVHRSGLVALGIATALMASCAFA) are cleaved as a signal peptide.

Belongs to the bacterial solute-binding protein 5 family. The complex is composed of two ATP-binding proteins (GsiA), two transmembrane proteins (GsiC and GsiD) and a solute-binding protein (GsiB).

The protein localises to the periplasm. Its function is as follows. Part of the ABC transporter complex GsiABCD involved in glutathione import. Binds glutathione. The chain is Glutathione-binding protein GsiB from Shigella boydii serotype 4 (strain Sb227).